Reading from the N-terminus, the 265-residue chain is Cytochrome c oxidase subunit 3 (265 aa).

The next 6 helical transmembrane spans lie at 16–36 (PWPI…VMYM), 41–61 (GGAT…FVWW), 81–101 (GPRY…FALF), 162–182 (AVYA…FQGM), 200–220 (FFLA…FSIV), and 245–265 (WHFV…WGGI).

Belongs to the cytochrome c oxidase subunit 3 family. Component of the cytochrome c oxidase (complex IV, CIV), a multisubunit enzyme composed of a catalytic core of 3 subunits and several supernumerary subunits. The complex exists as a monomer or a dimer and forms supercomplexes (SCs) in the inner mitochondrial membrane with ubiquinol-cytochrome c oxidoreductase (cytochrome b-c1 complex, complex III, CIII).

Its subcellular location is the mitochondrion inner membrane. The catalysed reaction is 4 Fe(II)-[cytochrome c] + O2 + 8 H(+)(in) = 4 Fe(III)-[cytochrome c] + 2 H2O + 4 H(+)(out). Functionally, component of the cytochrome c oxidase, the last enzyme in the mitochondrial electron transport chain which drives oxidative phosphorylation. The respiratory chain contains 3 multisubunit complexes succinate dehydrogenase (complex II, CII), ubiquinol-cytochrome c oxidoreductase (cytochrome b-c1 complex, complex III, CIII) and cytochrome c oxidase (complex IV, CIV), that cooperate to transfer electrons derived from NADH and succinate to molecular oxygen, creating an electrochemical gradient over the inner membrane that drives transmembrane transport and the ATP synthase. Cytochrome c oxidase is the component of the respiratory chain that catalyzes the reduction of oxygen to water. Electrons originating from reduced cytochrome c in the intermembrane space (IMS) are transferred via the dinuclear copper A center (CU(A)) of subunit 2 and heme A of subunit 1 to the active site in subunit 1, a binuclear center (BNC) formed by heme A3 and copper B (CU(B)). The BNC reduces molecular oxygen to 2 water molecules using 4 electrons from cytochrome c in the IMS and 4 protons from the mitochondrial matrix. The sequence is that of Cytochrome c oxidase subunit 3 (COX3) from Helianthus annuus (Common sunflower).